The sequence spans 457 residues: UDP-N-acetylmuramate--L-alanine ligase (457 aa).

An ATP-binding site is contributed by 118-124 (GTHGKTT).

The protein belongs to the MurCDEF family.

Its subcellular location is the cytoplasm. The catalysed reaction is UDP-N-acetyl-alpha-D-muramate + L-alanine + ATP = UDP-N-acetyl-alpha-D-muramoyl-L-alanine + ADP + phosphate + H(+). The protein operates within cell wall biogenesis; peptidoglycan biosynthesis. Functionally, cell wall formation. This chain is UDP-N-acetylmuramate--L-alanine ligase, found in Clostridium perfringens (strain 13 / Type A).